A 131-amino-acid polypeptide reads, in one-letter code: Sec-independent protein translocase protein TatB (131 aa).

A helical transmembrane segment spans residues 2–22 (FDGIGFMELLLIGVLGLVVLG). Residues 69 to 131 (NQGLKNLAPE…ENAKSDKPNG (63 aa)) form a disordered region. The segment covering 105–123 (AKETPAKETATTETTSTEN) has biased composition (low complexity).

The protein belongs to the TatB family. As to quaternary structure, the Tat system comprises two distinct complexes: a TatABC complex, containing multiple copies of TatA, TatB and TatC subunits, and a separate TatA complex, containing only TatA subunits. Substrates initially bind to the TatABC complex, which probably triggers association of the separate TatA complex to form the active translocon.

It is found in the cell inner membrane. Its function is as follows. Part of the twin-arginine translocation (Tat) system that transports large folded proteins containing a characteristic twin-arginine motif in their signal peptide across membranes. Together with TatC, TatB is part of a receptor directly interacting with Tat signal peptides. TatB may form an oligomeric binding site that transiently accommodates folded Tat precursor proteins before their translocation. The sequence is that of Sec-independent protein translocase protein TatB from Shewanella piezotolerans (strain WP3 / JCM 13877).